Here is a 240-residue protein sequence, read N- to C-terminus: NKG2-E type II integral membrane protein (240 aa).

The span at 1 to 12 shows a compositional bias: polar residues; it reads MSKQRGTFSEVS. Residues 1-31 are disordered; sequence MSKQRGTFSEVSLAQDPKWQQRKPKGNKSSI. Topologically, residues 1-70 are cytoplasmic; that stretch reads MSKQRGTFSE…CQGLLPPPEK (70 aa). Residues 71–93 form a helical; Signal-anchor for type II membrane protein membrane-spanning segment; the sequence is LTAEVLGIICIVLMATVLKTIVL. Residues 94–240 are Extracellular-facing; it reads IPFLEQNNSS…IMLTRLVLNS (147 aa). N-linked (GlcNAc...) asparagine glycosylation is present at N100. Positions 116 to 230 constitute a C-type lectin domain; sequence HCPEEWITYS…GSSRIIRRGF (115 aa). A disulfide bridge connects residues C117 and C128. N-linked (GlcNAc...) asparagine glycosylation is found at N149 and N179. A disulfide bridge links C207 with C220.

As to quaternary structure, can form disulfide-bonded heterodimer with CD94. As to expression, natural killer cells.

Its subcellular location is the membrane. In terms of biological role, plays a role as a receptor for the recognition of MHC class I HLA-E molecules by NK cells and some cytotoxic T-cells. The chain is NKG2-E type II integral membrane protein (KLRC3) from Homo sapiens (Human).